The following is a 390-amino-acid chain: Putative glutamate--cysteine ligase 2 (390 aa).

This sequence belongs to the glutamate--cysteine ligase type 2 family. YbdK subfamily.

The catalysed reaction is L-cysteine + L-glutamate + ATP = gamma-L-glutamyl-L-cysteine + ADP + phosphate + H(+). In terms of biological role, ATP-dependent carboxylate-amine ligase which exhibits weak glutamate--cysteine ligase activity. This is Putative glutamate--cysteine ligase 2 from Chloroflexus aggregans (strain MD-66 / DSM 9485).